A 256-amino-acid polypeptide reads, in one-letter code: Ubiquinone/menaquinone biosynthesis C-methyltransferase UbiE (256 aa).

S-adenosyl-L-methionine is bound by residues Thr79, Asp100, and 128 to 129; that span reads DA.

The protein belongs to the class I-like SAM-binding methyltransferase superfamily. MenG/UbiE family.

The enzyme catalyses a 2-demethylmenaquinol + S-adenosyl-L-methionine = a menaquinol + S-adenosyl-L-homocysteine + H(+). It catalyses the reaction a 2-methoxy-6-(all-trans-polyprenyl)benzene-1,4-diol + S-adenosyl-L-methionine = a 5-methoxy-2-methyl-3-(all-trans-polyprenyl)benzene-1,4-diol + S-adenosyl-L-homocysteine + H(+). It functions in the pathway quinol/quinone metabolism; menaquinone biosynthesis; menaquinol from 1,4-dihydroxy-2-naphthoate: step 2/2. It participates in cofactor biosynthesis; ubiquinone biosynthesis. Functionally, methyltransferase required for the conversion of demethylmenaquinol (DMKH2) to menaquinol (MKH2) and the conversion of 2-polyprenyl-6-methoxy-1,4-benzoquinol (DDMQH2) to 2-polyprenyl-3-methyl-6-methoxy-1,4-benzoquinol (DMQH2). In Pseudomonas fluorescens (strain SBW25), this protein is Ubiquinone/menaquinone biosynthesis C-methyltransferase UbiE.